A 433-amino-acid polypeptide reads, in one-letter code: Divergent protein kinase domain 2B (433 aa).

Residues 1–29 form the signal peptide; that stretch reads MEPRLGPKAAALHLGWPFLLLWVSGLSYS. N-linked (GlcNAc...) asparagine glycosylation occurs at asparagine 100.

It belongs to the DIPK family.

It localises to the secreted. The polypeptide is Divergent protein kinase domain 2B (DIPK2B) (Bos taurus (Bovine)).